A 681-amino-acid chain; its full sequence is SRSF protein kinase 2 (681 aa).

The interval 1 to 63 is disordered; it reads MSVNSEKSSS…EQEDPADYCK (63 aa). The span at 22–41 shows a compositional bias: pro residues; the sequence is LVPPPPPPPPPPPLPDPAPP. Positions 42–59 are enriched in acidic residues; the sequence is EPEEEILGSDDEEQEDPA. Ser-50 carries the post-translational modification Phosphoserine. One can recognise a Protein kinase domain in the interval 79 to 681; it reads YHVIRKLGWG…ECLRHPWLNS (603 aa). Residues 85–93 and Lys-108 contribute to the ATP site; that span reads LGWGHFSTV. Asp-212 serves as the catalytic Proton acceptor. Disordered stretches follow at residues 237-270, 302-452, and 467-499; these read WQKA…KKKL, ENIT…PLFS, and GSPL…KTKT. 2 positions are modified to phosphothreonine: Thr-331 and Thr-332. Position 378 is a phosphoserine (Ser-378). Acidic residues predominate over residues 395–419; the sequence is QLEDEEDDEDDCANPEEYNLDEPNA. The span at 421 to 431 shows a compositional bias: polar residues; the sequence is SDYTYSSSYEQ. Position 468 is a phosphoserine (Ser-468). The residue at position 471 (Thr-471) is a Phosphothreonine. 3 positions are modified to phosphoserine: Ser-477, Ser-479, and Ser-483. The residue at position 485 (Thr-485) is a Phosphothreonine; by PKB/AKT1. A phosphoserine mark is found at Ser-487 and Ser-490. Residue Ser-581 is modified to Phosphoserine; by CK2.

It belongs to the protein kinase superfamily. CMGC Ser/Thr protein kinase family. In terms of assembly, associates with U4/U6-U5 tri-small nuclear ribonucleoproteins (U4/U6-U5 tri-snRNPs). Interacts with PKB/AKT1 in a phosphorylation-dependent manner. The phosphorylated form (by PKB/AKT1) interacts with YWHAB and YWHAE. Interaction with YWHAB suppresses its cleavage by caspases and inhibits the release of its N-terminal pro-apoptotic fragment. Interacts with SFN. Interacts with ACIN1. Interacts with POLR2A/RNA polymerase II; the interaction occurs during the co-transcriptional formation of inappropriate R-loops. Mg(2+) serves as cofactor. In terms of processing, phosphorylation at Thr-485 by PKB/AKT1 enhances its stimulatory activity in triggering cyclin-D1 (CCND1) expression and promoting apoptosis in neurons, which can be blocked by YWHAB. It also enhances its protein kinase activity toward ACIN1 and SRSF2, promotes its nuclear translocation and prevents its proteolytic cleavage. Post-translationally, proteolytically cleaved at Asp-137 and Asp-401 by caspase-3 during apoptotic cell death. Cleavage at Asp-137 which is the major site of cleavage, produces a small N-terminal fragment that translocates into nucleus and promotes VP16-induced apoptosis. As to expression, expressed in testes, lung and brain.

The protein resides in the cytoplasm. Its subcellular location is the nucleus. It localises to the nucleoplasm. The protein localises to the nucleus speckle. It is found in the chromosome. The catalysed reaction is L-seryl-[protein] + ATP = O-phospho-L-seryl-[protein] + ADP + H(+). It carries out the reaction L-threonyl-[protein] + ATP = O-phospho-L-threonyl-[protein] + ADP + H(+). With respect to regulation, activated by phosphorylation on Ser-50 and Ser-581. Serine/arginine-rich protein-specific kinase which specifically phosphorylates its substrates at serine residues located in regions rich in arginine/serine dipeptides, known as RS domains and is involved in the phosphorylation of SR splicing factors and the regulation of splicing. Promotes neuronal apoptosis by up-regulating cyclin-D1 (CCND1) expression. This is done by the phosphorylation of SRSF2, leading to the suppression of p53/TP53 phosphorylation thereby relieving the repressive effect of p53/TP53 on cyclin-D1 (CCND1) expression. Phosphorylates ACIN1, and redistributes it from the nuclear speckles to the nucleoplasm, resulting in cyclin A1 but not cyclin A2 up-regulation. Plays an essential role in spliceosomal B complex formation via the phosphorylation of DDX23/PRP28. Probably by phosphorylating DDX23, leads to the suppression of incorrect R-loops formed during transcription; R-loops are composed of a DNA:RNA hybrid and the associated non-template single-stranded DNA. The polypeptide is SRSF protein kinase 2 (Mus musculus (Mouse)).